The primary structure comprises 143 residues: Cofilin (143 aa).

The 133-residue stretch at 5–137 (GVAVADESLT…AYESVLEKVS (133 aa)) folds into the ADF-H domain.

This sequence belongs to the actin-binding proteins ADF family.

It is found in the cytoplasm. It localises to the cytoskeleton. The protein localises to the nucleus matrix. Controls reversibly actin polymerization and depolymerization in a pH-sensitive manner. It has the ability to bind G- and F-actin in a 1:1 ratio of cofilin to actin. Binding to F-actin is regulated by tropomyosin. It is the major component of intranuclear and cytoplasmic actin rods. Required for accumulation of actin at the cell division site via depolymerizing actin at the cell ends. In association with myosin II has a role in the assembly of the contractile ring via severing actin filaments. Involved in the maintenance of the contractile ring once formed. In association with profilin and capping protein, has a role in the mitotic reorganization of the actin cytoskeleton. In Eremothecium gossypii (strain ATCC 10895 / CBS 109.51 / FGSC 9923 / NRRL Y-1056) (Yeast), this protein is Cofilin (COF1).